Reading from the N-terminus, the 113-residue chain is Parvalbumin beta (113 aa).

A1 carries the post-translational modification N-acetylalanine. The S-linked (Glc) cysteine glycan is linked to C18. EF-hand domains follow at residues 38–73 (FSAD…FAAD) and 77–112 (LTDA…WGAK). Ca(2+) contacts are provided by D51, D53, E55, F57, E59, E62, D90, D92, D94, K96, and E101.

Belongs to the parvalbumin family. Muscle (at protein level).

In terms of biological role, in muscle, parvalbumin is thought to be involved in relaxation after contraction. It binds two calcium ions. In Gadus morhua subsp. callarias (Baltic cod), this protein is Parvalbumin beta.